A 413-amino-acid polypeptide reads, in one-letter code: Probable N-acetyltransferase HLS1-like (413 aa).

One can recognise an N-acetyltransferase domain in the interval 5-187 (VEVREYDPSK…VNPVYAHRVN (183 aa)).

The protein belongs to the acetyltransferase family.

The polypeptide is Probable N-acetyltransferase HLS1-like (Arabidopsis thaliana (Mouse-ear cress)).